We begin with the raw amino-acid sequence, 695 residues long: NADPH--cytochrome P450 reductase (695 aa).

The Lumenal segment spans residues 1–8 (MAQLDTLD). The helical transmembrane segment at 9-31 (LVVLAVLLVGSVAYFTKGTYWAV) threads the bilayer. The Cytoplasmic portion of the chain corresponds to 32–695 (AKDPYASTGP…SGSYQEDVWS (664 aa)). In terms of domain architecture, Flavodoxin-like spans 66 to 221 (CVIFYGSQTG…DFLAWKEPMW (156 aa)). FMN contacts are provided by residues 72–77 (SQTGTA), 123–126 (ATYG), 169–178 (LGNNTYEHYN), and Asp204. The FAD-binding FR-type domain occupies 277 to 538 (HNPFIAPIAE…HVRHSNFKLP (262 aa)). Arg296 lines the NADP(+) pocket. Residues 451–454 (RYYS), 469–471 (TAV), and 486–489 (GVTT) contribute to the FAD site. NADP(+) is bound by residues Thr552, 614 to 615 (SR), 620 to 624 (KVYVQ), and Glu656. Trp694 provides a ligand contact to FAD.

Belongs to the NADPH--cytochrome P450 reductase family. It in the N-terminal section; belongs to the flavodoxin family. This sequence in the C-terminal section; belongs to the flavoprotein pyridine nucleotide cytochrome reductase family. It depends on FAD as a cofactor. FMN serves as cofactor.

It localises to the endoplasmic reticulum membrane. The protein resides in the mitochondrion outer membrane. Its subcellular location is the cell membrane. It carries out the reaction 2 oxidized [cytochrome P450] + NADPH = 2 reduced [cytochrome P450] + NADP(+) + H(+). In terms of biological role, this enzyme is required for electron transfer from NADP to cytochrome P450 in microsomes. It can also provide electron transfer to heme oxygenase and cytochrome B5. Involved in ergosterol biosynthesis. This is NADPH--cytochrome P450 reductase from Aspergillus niger (strain ATCC MYA-4892 / CBS 513.88 / FGSC A1513).